The primary structure comprises 227 residues: Transcription elongation factor A protein-like 2 (227 aa).

Disordered regions lie at residues 1–145 and 202–227; these read MEKL…TNKG and FYPRGPREFRGGCRAPRRDTEDIPYV. Composition is skewed to basic and acidic residues over residues 18–43, 50–82, 90–113, 120–136, and 206–227; these read IDNEEQPPHEGKPEVACILEDKKLEN, TGKRVEEPLKDKEKPESAGKAKGEGKSERKGKS, TEGKPERGGRAEGEGEPDSEREPE, SETRAAGKRPAEDDIPR, and GPREFRGGCRAPRRDTEDIPYV.

Belongs to the TFS-II family. TFA subfamily.

The protein localises to the nucleus. Its function is as follows. May be involved in transcriptional regulation. The protein is Transcription elongation factor A protein-like 2 (TCEAL2) of Homo sapiens (Human).